A 265-amino-acid chain; its full sequence is Diphthine synthase (265 aa).

Residues leucine 9, aspartate 85, isoleucine 88, 113 to 114 (TA), leucine 168, alanine 211, and histidine 236 contribute to the S-adenosyl-L-methionine site.

It belongs to the diphthine synthase family. Homodimer.

It catalyses the reaction 2-[(3S)-amino-3-carboxypropyl]-L-histidyl-[translation elongation factor 2] + 3 S-adenosyl-L-methionine = diphthine-[translation elongation factor 2] + 3 S-adenosyl-L-homocysteine + 3 H(+). It participates in protein modification; peptidyl-diphthamide biosynthesis. S-adenosyl-L-methionine-dependent methyltransferase that catalyzes the trimethylation of the amino group of the modified target histidine residue in translation elongation factor 2 (EF-2), to form an intermediate called diphthine. The three successive methylation reactions represent the second step of diphthamide biosynthesis. In Halorubrum lacusprofundi (strain ATCC 49239 / DSM 5036 / JCM 8891 / ACAM 34), this protein is Diphthine synthase.